The following is a 185-amino-acid chain: ATP-dependent protease subunit HslV (185 aa).

Thr-12 is a catalytic residue. Positions 168, 171, and 174 each coordinate Na(+).

The protein belongs to the peptidase T1B family. HslV subfamily. As to quaternary structure, a double ring-shaped homohexamer of HslV is capped on each side by a ring-shaped HslU homohexamer. The assembly of the HslU/HslV complex is dependent on binding of ATP.

The protein localises to the cytoplasm. It carries out the reaction ATP-dependent cleavage of peptide bonds with broad specificity.. Allosterically activated by HslU binding. In terms of biological role, protease subunit of a proteasome-like degradation complex believed to be a general protein degrading machinery. This chain is ATP-dependent protease subunit HslV, found in Cereibacter sphaeroides (strain ATCC 17029 / ATH 2.4.9) (Rhodobacter sphaeroides).